Here is a 310-residue protein sequence, read N- to C-terminus: Aspartate carbamoyltransferase catalytic subunit (310 aa).

2 residues coordinate carbamoyl phosphate: R55 and T56. Residue K83 coordinates L-aspartate. The carbamoyl phosphate site is built by R105, H133, and Q136. Positions 166 and 220 each coordinate L-aspartate. Positions 261 and 262 each coordinate carbamoyl phosphate.

The protein belongs to the aspartate/ornithine carbamoyltransferase superfamily. ATCase family. Heterododecamer (2C3:3R2) of six catalytic PyrB chains organized as two trimers (C3), and six regulatory PyrI chains organized as three dimers (R2).

The enzyme catalyses carbamoyl phosphate + L-aspartate = N-carbamoyl-L-aspartate + phosphate + H(+). It functions in the pathway pyrimidine metabolism; UMP biosynthesis via de novo pathway; (S)-dihydroorotate from bicarbonate: step 2/3. Catalyzes the condensation of carbamoyl phosphate and aspartate to form carbamoyl aspartate and inorganic phosphate, the committed step in the de novo pyrimidine nucleotide biosynthesis pathway. This is Aspartate carbamoyltransferase catalytic subunit from Chlorobium phaeovibrioides (strain DSM 265 / 1930) (Prosthecochloris vibrioformis (strain DSM 265)).